A 1247-amino-acid polypeptide reads, in one-letter code: Catenin delta-2 (1247 aa).

3 disordered regions span residues methionine 1–alanine 50, serine 134–histidine 238, and leucine 256–serine 309. Residue serine 7 is modified to Phosphoserine. Polar residues predominate over residues proline 22–alanine 50. The stretch at serine 49–lysine 84 forms a coiled coil. The span at serine 149–serine 160 shows a compositional bias: low complexity. The span at tyrosine 172–threonine 207 shows a compositional bias: polar residues. Arginine 209 carries the omega-N-methylarginine modification. Pro residues predominate over residues proline 218 to proline 228. Omega-N-methylarginine is present on arginine 261. A phosphoserine mark is found at serine 264 and serine 273. Residues proline 265–lysine 276 show a composition bias toward polar residues. Omega-N-methylarginine is present on residues arginine 279 and arginine 293. The span at serine 296–serine 309 shows a compositional bias: polar residues. Residues serine 324, serine 357, serine 412, and serine 458 each carry the phosphoserine modification. The stretch at glycine 391–serine 433 is one ARM 1 repeat. The disordered stretch occupies residues proline 429–alanine 480. Polar residues predominate over residues leucine 466 to proline 475. Serine 511 carries the phosphoserine modification. Phosphotyrosine is present on tyrosine 513. Residues serine 514–aspartate 533 form a disordered region. ARM repeat units lie at residues lysine 537 to phenylalanine 576, asparagine 579 to tyrosine 618, aspartate 623 to serine 663, leucine 679 to serine 721, glutamate 725 to tyrosine 770, proline 832 to alanine 872, valine 904 to leucine 943, and methionine 997 to glutamine 1040. Disordered stretches follow at residues threonine 1064–arginine 1131 and alanine 1152–tyrosine 1176. Over residues proline 1072–isoleucine 1081 the composition is skewed to polar residues. A phosphoserine mark is found at serine 1087 and serine 1098. Low complexity predominate over residues serine 1087–arginine 1100. Residues isoleucine 1103 to tyrosine 1112 show a composition bias toward basic and acidic residues.

The protein belongs to the beta-catenin family. Binds to E-cadherin at a juxtamembrane site within the cytoplasmic domain. Binds to PSEN1. Interacts with PDZD2. Interacts (via the extreme C-terminus) with FRMPD2 (via the PDZ 2 domain). Interacts with ZBTB33. Interacts with ARHGEF28. Interacts with CDK5. Interacts with CTNNB1. Interacts with GSK3A and GSK3B. Interacts with DNM2. Interacts with CCDC85B. O-glycosylated. In terms of processing, phosphorylated by CDK5. Phosphorylated by GSK3B. Expressed in neurons and glial cells. Isoform 2 was found to be the most predominant isoform in various brain regions. Expressed at neuromuscular junctions.

The protein localises to the nucleus. It is found in the cell junction. It localises to the adherens junction. Its subcellular location is the cell projection. The protein resides in the dendrite. The protein localises to the perikaryon. Its function is as follows. Has a critical role in neuronal development, particularly in the formation and/or maintenance of dendritic spines and synapses. Involved in the regulation of canonical Wnt signaling. It probably acts on beta-catenin turnover, facilitating beta-catenin interaction with GSK3B, phosphorylation, ubiquitination and degradation. May be involved in neuronal cell adhesion and tissue morphogenesis and integrity by regulating adhesion molecules. Functions as a transcriptional activator when bound to ZBTB33. This chain is Catenin delta-2 (Ctnnd2), found in Mus musculus (Mouse).